We begin with the raw amino-acid sequence, 1001 residues long: 26S proteasome non-ATPase regulatory subunit 1 homolog B (1001 aa).

The residue at position 2 (Ala-2) is an N-acetylalanine. Residue Lys-166 forms a Glycyl lysine isopeptide (Lys-Gly) (interchain with G-Cter in ubiquitin) linkage. 10 PC repeats span residues 412 to 447 (SATA…GGSP), 452 to 485 (GALY…EVIQ), 487 to 521 (GACL…VAGE), 522 to 555 (AAGI…EKII), 557 to 590 (GLAL…IIRY), 591 to 626 (GGMY…DVRR), 627 to 659 (TAVL…PHVR), 661 to 695 (GAAL…FVRQ), 696 to 736 (GALI…DTMS), and 739 to 771 (GAIL…TAVI). Disordered regions lie at residues 853 to 896 (AKKE…TVEK) and 954 to 1001 (SLTD…YASP). A compositionally biased stretch (basic and acidic residues) spans 854–863 (KKEAEQKAKA). Ser-889 carries the post-translational modification Phosphoserine. Positions 961–985 (STASPAVGAEAAGQAQQAATTSAMA) are enriched in low complexity.

The protein belongs to the proteasome subunit S1 family. In terms of assembly, component of the 19S regulatory particle (RP/PA700) base subcomplex of the 26S proteasome. The 26S proteasome is composed of a core protease (CP), known as the 20S proteasome, capped at one or both ends by the 19S regulatory particle (RP/PA700). The RP/PA700 complex is composed of at least 17 different subunits in two subcomplexes, the base and the lid, which form the portions proximal and distal to the 20S proteolytic core, respectively.

Its function is as follows. Acts as a regulatory subunit of the 26 proteasome which is involved in the ATP-dependent degradation of ubiquitinated proteins. This chain is 26S proteasome non-ATPase regulatory subunit 1 homolog B (RPN2B), found in Arabidopsis thaliana (Mouse-ear cress).